Consider the following 677-residue polypeptide: UvrABC system protein B (677 aa).

Residues 26 to 414 enclose the Helicase ATP-binding domain; it reads DNLDAGLAHQ…SGNEVVEQVV (389 aa). 39 to 46 contributes to the ATP binding site; the sequence is GVTGSGKT. A Beta-hairpin motif is present at residues 92–115; sequence YYDYYQPEAYVPTTDTFIEKDASI. The Helicase C-terminal domain occupies 432–598; sequence QVDDLMSEIR…GLNKDITDVM (167 aa). In terms of domain architecture, UVR spans 637-672; sequence MKEIDAKEKEMYKAAQNLEFEQAGKLRDEVAELREQ.

This sequence belongs to the UvrB family. Forms a heterotetramer with UvrA during the search for lesions. Interacts with UvrC in an incision complex.

It is found in the cytoplasm. Functionally, the UvrABC repair system catalyzes the recognition and processing of DNA lesions. A damage recognition complex composed of 2 UvrA and 2 UvrB subunits scans DNA for abnormalities. Upon binding of the UvrA(2)B(2) complex to a putative damaged site, the DNA wraps around one UvrB monomer. DNA wrap is dependent on ATP binding by UvrB and probably causes local melting of the DNA helix, facilitating insertion of UvrB beta-hairpin between the DNA strands. Then UvrB probes one DNA strand for the presence of a lesion. If a lesion is found the UvrA subunits dissociate and the UvrB-DNA preincision complex is formed. This complex is subsequently bound by UvrC and the second UvrB is released. If no lesion is found, the DNA wraps around the other UvrB subunit that will check the other stand for damage. In Idiomarina loihiensis (strain ATCC BAA-735 / DSM 15497 / L2-TR), this protein is UvrABC system protein B.